The sequence spans 354 residues: Guanine nucleotide-binding protein G(o) subunit alpha (354 aa).

Gly2 is lipidated: N-myristoyl glycine. Cys3 carries S-palmitoyl cysteine lipidation. The G-alpha domain maps to 32 to 354 (KDVKLLLLGA…ANNLRGCGLY (323 aa)). The interval 35-48 (KLLLLGAGESGKST) is G1 motif. Residues Glu43, Lys46, Ser47, Thr48, Ser152, Leu176, Arg177, Thr178, and Arg179 each contribute to the GTP site. Ser47 contributes to the Mg(2+) binding site. Residues 174-182 (DILRTRVKT) are G2 motif. Arg179 is modified (ADP-ribosylarginine; by cholera toxin). A Mg(2+)-binding site is contributed by Thr182. The segment at 197–206 (FRLFDVGGQR) is G3 motif. Gln205 bears the 5-glutamyl histamine mark. The interval 266–273 (ILFLNKKD) is G4 motif. GTP-binding residues include Asn270, Asp273, and Cys325. Residues 324–329 (TCATDT) form a G5 motif region. Cys351 carries S-palmitoyl cysteine lipidation. Cys351 bears the ADP-ribosylcysteine; by pertussis toxin mark.

It belongs to the G-alpha family. G(i/o/t/z) subfamily. In terms of assembly, g proteins are composed of 3 units; alpha, beta and gamma. The alpha chain contains the guanine nucleotide binding site. Forms a complex with GNB1 and GNG3. Interacts with RGS14. Interacts with RGS16. Interacts with RGS19. Interacts (when palmitoylated) with ADGRG3. Post-translationally, histaminylated at Gln-205 residues by TGM2. Palmitoylated at Cys-351, leading to binding to ADGRG3.

Its subcellular location is the cell membrane. The protein resides in the membrane. It catalyses the reaction GTP + H2O = GDP + phosphate + H(+). Its activity is regulated as follows. The GTPase activity is promoted by GTPAse activators, such as RGS14, RGS16 and RGS19. Guanine nucleotide-binding proteins (G proteins) function as transducers downstream of G protein-coupled receptors (GPCRs) in numerous signaling cascades. The alpha chain contains the guanine nucleotide binding site and alternates between an active, GTP-bound state and an inactive, GDP-bound state. Signaling by an activated GPCR promotes GDP release and GTP binding. The alpha subunit has a low GTPase activity that converts bound GTP to GDP, thereby terminating the signal. Both GDP release and GTP hydrolysis are modulated by numerous regulatory proteins. Signaling is mediated via effector proteins, such as adenylate cyclase. Inhibits adenylate cyclase activity, leading to decreased intracellular cAMP levels. The chain is Guanine nucleotide-binding protein G(o) subunit alpha (GNAO1) from Homo sapiens (Human).